We begin with the raw amino-acid sequence, 172 residues long: Peptide methionine sulfoxide reductase MsrA 2 (172 aa).

The active site involves C12.

Belongs to the MsrA Met sulfoxide reductase family.

It catalyses the reaction L-methionyl-[protein] + [thioredoxin]-disulfide + H2O = L-methionyl-(S)-S-oxide-[protein] + [thioredoxin]-dithiol. The catalysed reaction is [thioredoxin]-disulfide + L-methionine + H2O = L-methionine (S)-S-oxide + [thioredoxin]-dithiol. Functionally, has an important function as a repair enzyme for proteins that have been inactivated by oxidation. Catalyzes the reversible oxidation-reduction of methionine sulfoxide in proteins to methionine. This is Peptide methionine sulfoxide reductase MsrA 2 (msrA2) from Lactococcus lactis subsp. lactis (strain IL1403) (Streptococcus lactis).